The sequence spans 186 residues: UPF0157 protein SCO7215 (186 aa).

It belongs to the UPF0157 (GrpB) family.

This chain is UPF0157 protein SCO7215, found in Streptomyces coelicolor (strain ATCC BAA-471 / A3(2) / M145).